Here is a 325-residue protein sequence, read N- to C-terminus: Fe-S cluster assembly protein DRE2 (325 aa).

Residues 1-169 (MTLGDRLGLI…KKKDAGNNEQ (169 aa)) form an N-terminal SAM-like domain region. Positions 170 to 222 (VVKLSVEDVEDDLDDDPEVSNELLSKAKFFNSLSLNQDAEIDENNLIKSTDGD) are linker. The [2Fe-2S] cluster site is built by C229, C240, C243, and C245. Residues 229–245 (CGKTNTKKRRACKDCTC) are fe-S binding site A. [4Fe-4S] cluster contacts are provided by C288, C291, C299, and C302. 2 short sequence motifs (cx2C motif) span residues 288–291 (CGSC) and 299–302 (CSGC). The fe-S binding site B stretch occupies residues 288–302 (CGSCSLGDAFRCSGC).

It belongs to the anamorsin family. Monomer. Interacts with TAH18. Interacts with MIA40. [2Fe-2S] cluster is required as a cofactor. [4Fe-4S] cluster serves as cofactor.

The protein resides in the cytoplasm. Its subcellular location is the mitochondrion intermembrane space. Component of the cytosolic iron-sulfur (Fe-S) protein assembly (CIA) machinery required for the maturation of extramitochondrial Fe-S proteins. Part of an electron transfer chain functioning in an early step of cytosolic Fe-S biogenesis, facilitating the de novo assembly of a [4Fe-4S] cluster on the scaffold complex CFD1-NBP35. Electrons are transferred to DRE2 from NADPH via the FAD- and FMN-containing protein TAH18. TAH18-DRE2 are also required for the assembly of the diferric tyrosyl radical cofactor of ribonucleotide reductase (RNR), probably by providing electrons for reduction during radical cofactor maturation in the catalytic small subunit RNR2. The polypeptide is Fe-S cluster assembly protein DRE2 (Vanderwaltozyma polyspora (strain ATCC 22028 / DSM 70294 / BCRC 21397 / CBS 2163 / NBRC 10782 / NRRL Y-8283 / UCD 57-17) (Kluyveromyces polysporus)).